A 543-amino-acid chain; its full sequence is Glucose-6-phosphate isomerase (543 aa).

E351 serves as the catalytic Proton donor. Residues H382 and K511 contribute to the active site.

This sequence belongs to the GPI family.

It is found in the cytoplasm. The enzyme catalyses alpha-D-glucose 6-phosphate = beta-D-fructose 6-phosphate. The protein operates within carbohydrate biosynthesis; gluconeogenesis. It functions in the pathway carbohydrate degradation; glycolysis; D-glyceraldehyde 3-phosphate and glycerone phosphate from D-glucose: step 2/4. Its function is as follows. Catalyzes the reversible isomerization of glucose-6-phosphate to fructose-6-phosphate. In Hydrogenovibrio crunogenus (strain DSM 25203 / XCL-2) (Thiomicrospira crunogena), this protein is Glucose-6-phosphate isomerase.